The primary structure comprises 227 residues: Cytochrome c oxidase subunit 2 (227 aa).

At 1 to 14 (MTHPLQLGFQDATS) the chain is on the mitochondrial intermembrane side. Residues 15-45 (PIMEELLHFHDHTLMIVFLISSLVLYIITLM) traverse the membrane as a helical segment. The Mitochondrial matrix portion of the chain corresponds to 46-59 (LTTKLTHTSTMDAQ). Residues 60-87 (EVETVWTILPAIILILIALPSLRILYMM) form a helical membrane-spanning segment. Over 88 to 227 (DEINNPLLTV…YFEDWSVSMT (140 aa)) the chain is Mitochondrial intermembrane. Residues histidine 161, cysteine 196, glutamate 198, cysteine 200, histidine 204, and methionine 207 each coordinate Cu cation. Mg(2+) is bound at residue glutamate 198. Tyrosine 218 carries the phosphotyrosine modification.

Belongs to the cytochrome c oxidase subunit 2 family. In terms of assembly, component of the cytochrome c oxidase (complex IV, CIV), a multisubunit enzyme composed of 14 subunits. The complex is composed of a catalytic core of 3 subunits MT-CO1, MT-CO2 and MT-CO3, encoded in the mitochondrial DNA, and 11 supernumerary subunits COX4I, COX5A, COX5B, COX6A, COX6B, COX6C, COX7A, COX7B, COX7C, COX8 and NDUFA4, which are encoded in the nuclear genome. The complex exists as a monomer or a dimer and forms supercomplexes (SCs) in the inner mitochondrial membrane with NADH-ubiquinone oxidoreductase (complex I, CI) and ubiquinol-cytochrome c oxidoreductase (cytochrome b-c1 complex, complex III, CIII), resulting in different assemblies (supercomplex SCI(1)III(2)IV(1) and megacomplex MCI(2)III(2)IV(2)). Found in a complex with TMEM177, COA6, COX18, COX20, SCO1 and SCO2. Interacts with TMEM177 in a COX20-dependent manner. Interacts with COX20. Interacts with COX16. It depends on Cu cation as a cofactor.

Its subcellular location is the mitochondrion inner membrane. The enzyme catalyses 4 Fe(II)-[cytochrome c] + O2 + 8 H(+)(in) = 4 Fe(III)-[cytochrome c] + 2 H2O + 4 H(+)(out). Its function is as follows. Component of the cytochrome c oxidase, the last enzyme in the mitochondrial electron transport chain which drives oxidative phosphorylation. The respiratory chain contains 3 multisubunit complexes succinate dehydrogenase (complex II, CII), ubiquinol-cytochrome c oxidoreductase (cytochrome b-c1 complex, complex III, CIII) and cytochrome c oxidase (complex IV, CIV), that cooperate to transfer electrons derived from NADH and succinate to molecular oxygen, creating an electrochemical gradient over the inner membrane that drives transmembrane transport and the ATP synthase. Cytochrome c oxidase is the component of the respiratory chain that catalyzes the reduction of oxygen to water. Electrons originating from reduced cytochrome c in the intermembrane space (IMS) are transferred via the dinuclear copper A center (CU(A)) of subunit 2 and heme A of subunit 1 to the active site in subunit 1, a binuclear center (BNC) formed by heme A3 and copper B (CU(B)). The BNC reduces molecular oxygen to 2 water molecules using 4 electrons from cytochrome c in the IMS and 4 protons from the mitochondrial matrix. The sequence is that of Cytochrome c oxidase subunit 2 (MT-CO2) from Carlito syrichta (Philippine tarsier).